The following is a 551-amino-acid chain: CTP synthase (551 aa).

The interval 1-267 (MSGTKYIFVT…DALVLEKLGL (267 aa)) is amidoligase domain. A CTP-binding site is contributed by serine 15. Serine 15 is a binding site for UTP. 16-21 (SIGKGT) contributes to the ATP binding site. Tyrosine 56 is an L-glutamine binding site. Aspartate 73 serves as a coordination point for ATP. Mg(2+) contacts are provided by aspartate 73 and glutamate 141. CTP contacts are provided by residues 148 to 150 (DIE), 188 to 193 (KTKPTQ), and lysine 224. UTP is bound by residues 188–193 (KTKPTQ) and lysine 224. The Glutamine amidotransferase type-1 domain maps to 292–534 (RVAVIGKYIR…VGACLGAAEE (243 aa)). Residue glycine 355 coordinates L-glutamine. The active-site Nucleophile; for glutamine hydrolysis is cysteine 382. Residues 383-386 (LGMQ), glutamate 406, and arginine 462 each bind L-glutamine. Active-site residues include histidine 507 and glutamate 509.

It belongs to the CTP synthase family. In terms of assembly, homotetramer.

It carries out the reaction UTP + L-glutamine + ATP + H2O = CTP + L-glutamate + ADP + phosphate + 2 H(+). It catalyses the reaction L-glutamine + H2O = L-glutamate + NH4(+). The enzyme catalyses UTP + NH4(+) + ATP = CTP + ADP + phosphate + 2 H(+). It functions in the pathway pyrimidine metabolism; CTP biosynthesis via de novo pathway; CTP from UDP: step 2/2. Allosterically activated by GTP, when glutamine is the substrate; GTP has no effect on the reaction when ammonia is the substrate. The allosteric effector GTP functions by stabilizing the protein conformation that binds the tetrahedral intermediate(s) formed during glutamine hydrolysis. Inhibited by the product CTP, via allosteric rather than competitive inhibition. In terms of biological role, catalyzes the ATP-dependent amination of UTP to CTP with either L-glutamine or ammonia as the source of nitrogen. Regulates intracellular CTP levels through interactions with the four ribonucleotide triphosphates. This is CTP synthase from Rubrobacter xylanophilus (strain DSM 9941 / JCM 11954 / NBRC 16129 / PRD-1).